The sequence spans 87 residues: Small ribosomal subunit protein bS16 (87 aa).

The protein belongs to the bacterial ribosomal protein bS16 family.

This chain is Small ribosomal subunit protein bS16, found in Ehrlichia chaffeensis (strain ATCC CRL-10679 / Arkansas).